The following is a 328-amino-acid chain: Gonadotropin-releasing hormone receptor (328 aa).

The Extracellular segment spans residues 1–38 (MANGDSPDQNENHCSAINSSILLTPGSLPTLTLSGKIR). N-linked (GlcNAc...) asparagine glycosylation is present at Asn-18. A helical membrane pass occupies residues 39–58 (VTVTFFLFLLSTIFNTSFLL). Over 59-77 (KLQNWTQRKEKRKKLSKMK) the chain is Cytoplasmic. A helical transmembrane segment spans residues 78–97 (VLLKHLTLANLLETLIVMPL). Residues 98–115 (DGMWNITVQWYAGELLCK) are Extracellular-facing. A glycan (N-linked (GlcNAc...) asparagine) is linked at Asn-102. An intrachain disulfide couples Cys-114 to Cys-196. A helical transmembrane segment spans residues 116 to 137 (VLSYLKLFSMYAPAFMMVVISL). Residues 138–164 (DRSLAITRPLAVKSNSKLGQFMIGLAW) are Cytoplasmic-facing. A helical transmembrane segment spans residues 165–184 (LLSSIFAGPQLYIFGMIHLA). Residues 185–212 (DDSGQTEGFSQCVTHCSFPQWWHQAFYN) lie on the Extracellular side of the membrane. Residues 213-232 (FFTFSCLFIIPLLIMLICNA) form a helical membrane-spanning segment. The Cytoplasmic portion of the chain corresponds to 233–281 (KIIFTLTRVLHQDPHKLQLNQSKNNIPQARLRTLKMTVAFATSFTVCWT). The helical transmembrane segment at 282–300 (PYYVLGIWYWFDPDMVNRV) threads the bilayer. Residues 301–306 (SDPVNH) lie on the Extracellular side of the membrane. Residues 307-326 (FFFLFAFLNPCFDPLIYGYF) traverse the membrane as a helical segment. Residues 327–328 (SL) are Cytoplasmic-facing.

This sequence belongs to the G-protein coupled receptor 1 family.

The protein resides in the cell membrane. In terms of biological role, receptor for gonadotropin releasing hormone (GnRH) that mediates the action of GnRH to stimulate the secretion of the gonadotropic hormones luteinizing hormone (LH) and follicle-stimulating hormone (FSH). This receptor mediates its action by association with G-proteins that activate a phosphatidylinositol-calcium second messenger system. The protein is Gonadotropin-releasing hormone receptor (GNRHR) of Ovis aries (Sheep).